Reading from the N-terminus, the 361-residue chain is MTRAFNFSAGPATLPESVLRQAQAEMLDWHGSGASIVEMSHRGAEFMSVAAEAEADLRRLLDIPDDYAVLFLSGGATTQQALIPLNFAAPGQRADYVVSGHWGKTAVKQAGVYVDVNIAASSEANGYRELPARADWQLSRDAAYVHITANETIHGVEFRDVPDTGNVPLIADFSSSIASEPLDVRRYGVIYAGAQKNLGPVGVAVMIIRRDLLERSGQPRADIFDYRSHVARDSMLNTPPTWNWYLAGLVFKWMLAEGGVTEFAKRNAAKAALVYGAIDGSGGFYRNEVAYAARSRMNIPFFLPDAELDARFVAEAKAAGLLALKGHKVVGGIRASLYNAMPLAGAEALVAFMADFQQRHG.

Residue Arg-42 coordinates L-glutamate. Pyridoxal 5'-phosphate-binding positions include 76-77, Trp-102, Thr-152, Asp-172, and Gln-195; that span reads AT. Lys-196 bears the N6-(pyridoxal phosphate)lysine mark. 237-238 lines the pyridoxal 5'-phosphate pocket; the sequence is NT.

The protein belongs to the class-V pyridoxal-phosphate-dependent aminotransferase family. SerC subfamily. As to quaternary structure, homodimer. Pyridoxal 5'-phosphate is required as a cofactor.

It localises to the cytoplasm. The enzyme catalyses O-phospho-L-serine + 2-oxoglutarate = 3-phosphooxypyruvate + L-glutamate. The catalysed reaction is 4-(phosphooxy)-L-threonine + 2-oxoglutarate = (R)-3-hydroxy-2-oxo-4-phosphooxybutanoate + L-glutamate. It functions in the pathway amino-acid biosynthesis; L-serine biosynthesis; L-serine from 3-phospho-D-glycerate: step 2/3. The protein operates within cofactor biosynthesis; pyridoxine 5'-phosphate biosynthesis; pyridoxine 5'-phosphate from D-erythrose 4-phosphate: step 3/5. Functionally, catalyzes the reversible conversion of 3-phosphohydroxypyruvate to phosphoserine and of 3-hydroxy-2-oxo-4-phosphonooxybutanoate to phosphohydroxythreonine. This Stenotrophomonas maltophilia (strain K279a) protein is Phosphoserine aminotransferase.